A 494-amino-acid polypeptide reads, in one-letter code: Aspartyl/glutamyl-tRNA(Asn/Gln) amidotransferase subunit B (494 aa).

It belongs to the GatB/GatE family. GatB subfamily. In terms of assembly, heterotrimer of A, B and C subunits.

The catalysed reaction is L-glutamyl-tRNA(Gln) + L-glutamine + ATP + H2O = L-glutaminyl-tRNA(Gln) + L-glutamate + ADP + phosphate + H(+). The enzyme catalyses L-aspartyl-tRNA(Asn) + L-glutamine + ATP + H2O = L-asparaginyl-tRNA(Asn) + L-glutamate + ADP + phosphate + 2 H(+). Its function is as follows. Allows the formation of correctly charged Asn-tRNA(Asn) or Gln-tRNA(Gln) through the transamidation of misacylated Asp-tRNA(Asn) or Glu-tRNA(Gln) in organisms which lack either or both of asparaginyl-tRNA or glutaminyl-tRNA synthetases. The reaction takes place in the presence of glutamine and ATP through an activated phospho-Asp-tRNA(Asn) or phospho-Glu-tRNA(Gln). The protein is Aspartyl/glutamyl-tRNA(Asn/Gln) amidotransferase subunit B of Rhodopseudomonas palustris (strain BisA53).